We begin with the raw amino-acid sequence, 379 residues long: Cathepsin B-like protease 1 (379 aa).

The first 30 residues, 1–30, serve as a signal peptide directing secretion; it reads MADSCCIRLHLLASVFLLLFSSFNLQGIAA. A propeptide spans 31 to 102 (activation peptide); the sequence is ENLSKQKLTS…PIVRHDLSLK (72 aa). N-linked (GlcNAc...) asparagine glycans are attached at residues Asn32 and Asn69. 6 cysteine pairs are disulfide-bonded: Cys116–Cys165, Cys148–Cys191, Cys182–Cys236, Cys183–Cys187, Cys213–Cys240, and Cys222–Cys227. The active site involves Cys151. N-linked (GlcNAc...) asparagine glycosylation occurs at Asn171. Residues His306 and Asn327 contribute to the active site. N-linked (GlcNAc...) asparagine glycosylation is present at Asn330. Positions 363-379 are cleaved as a propeptide — removed in mature form; sequence NVFKGITTSDDLLVSSV.

Belongs to the peptidase C1 family.

Its function is as follows. Thiol protease that plays a central role in plant programmed cell death (PCD). In addition to its role in protein degradation, may cleave and/or degrade a number of target proteins, activating signaling towards PCD. Contributes to the increase of caspase-3-like activity after UV-C-induced PCD and is required for abiotic stress-induced PCD. Functions redundantly with CATHB2 and CATHB3 in basal defense and distinct forms of plant programmed cell death (PCD). Participates in the establishment of basal resistance against the bacterial pathogen Pseudomonase syringae pv. tomato DC3000. Required for full levels of PCD during resistance (R) gene-mediated hypersensitive response (HR). Involved in the regulation of senescence, a developmental form of PCD in plants. The sequence is that of Cathepsin B-like protease 1 from Arabidopsis thaliana (Mouse-ear cress).